Here is a 101-residue protein sequence, read N- to C-terminus: Ubiquitin-related modifier 1 (101 aa).

At glycine 101 the chain carries 1-thioglycine. Glycine 101 participates in a covalent cross-link: Glycyl lysine isopeptide (Gly-Lys) (interchain with K-? in acceptor proteins).

This sequence belongs to the URM1 family. C-terminal thiocarboxylation occurs in 2 steps, it is first acyl-adenylated (-COAMP) via the hesA/moeB/thiF part of UBA4, then thiocarboxylated (-COSH) via the rhodanese domain of UBA4.

Its subcellular location is the cytoplasm. It functions in the pathway tRNA modification; 5-methoxycarbonylmethyl-2-thiouridine-tRNA biosynthesis. Acts as a sulfur carrier required for 2-thiolation of mcm(5)S(2)U at tRNA wobble positions of cytosolic tRNA(Lys), tRNA(Glu) and tRNA(Gln). Serves as sulfur donor in tRNA 2-thiolation reaction by being thiocarboxylated (-COSH) at its C-terminus by the MOCS3 homolog UBA4. The sulfur is then transferred to tRNA to form 2-thiolation of mcm(5)S(2)U. Prior mcm(5) tRNA modification by the elongator complex is required for 2-thiolation. Also acts as a ubiquitin-like protein (UBL) that is covalently conjugated via an isopeptide bond to lysine residues of target proteins such as AHP1. The thiocarboxylated form serves as substrate for conjugation and oxidative stress specifically induces the formation of UBL-protein conjugates. This chain is Ubiquitin-related modifier 1, found in Kluyveromyces lactis (strain ATCC 8585 / CBS 2359 / DSM 70799 / NBRC 1267 / NRRL Y-1140 / WM37) (Yeast).